Consider the following 384-residue polypeptide: Zinc metalloproteinase nas-12 (384 aa).

Positions 1-25 (MLYIPQFSIYFCLGYLLLFCKISNA) are cleaved as a signal peptide. Positions 73–271 (VSIKGSSMNR…EKLNRLGQCG (199 aa)) constitute a Peptidase M12A domain. Intrachain disulfides connect Cys-116-Cys-270, Cys-137-Cys-156, Cys-287-Cys-325, Cys-296-Cys-318, and Cys-305-Cys-322. A Zn(2+)-binding site is contributed by His-164. Glu-165 is an active-site residue. Zn(2+) is bound by residues His-168 and His-174. One can recognise a ShKT 1 domain in the interval 287–325 (CQDVATAVSCEGNRRRGMCKNPFYKQMMIKSCQKTCRLC). An N-linked (GlcNAc...) asparagine glycan is attached at Asn-340. 3 disulfide bridges follow: Cys-348–Cys-384, Cys-355–Cys-377, and Cys-364–Cys-381. Residues 348-384 (CEDKHPRCDIYSHNGFCTLPFYDDVRYQLCAKTCNLC) form the ShKT 2 domain.

Requires Zn(2+) as cofactor. In terms of tissue distribution, expressed in pharyngeal glands.

The protein localises to the secreted. Its function is as follows. Metalloprotease. The sequence is that of Zinc metalloproteinase nas-12 (nas-12) from Caenorhabditis elegans.